We begin with the raw amino-acid sequence, 282 residues long: ABC transporter I family member 21 (282 aa).

The ABC transporter domain maps to 13–248; it reads IRVSGMQFSY…KTSPNLLSVV (236 aa). ATP is bound at residue 46 to 53; that stretch reads GANGSGKT.

This sequence belongs to the ABC transporter superfamily. ABCI family. In terms of tissue distribution, expressed in root elongating zone and root meristem, as well as in elongating etiolated hypocotyls.

It is found in the cytoplasm. The chain is ABC transporter I family member 21 (ABCI21) from Arabidopsis thaliana (Mouse-ear cress).